Consider the following 412-residue polypeptide: Histone-lysine N-methyltransferase SUV39H1 (412 aa).

The tract at residues 1–89 (MAENLKGCSV…LKCIRVLKQF (89 aa)) is interaction with SIRT1. The Chromo domain maps to 43-101 (FEVEYLCDYKKIREQEYYLVKWRGYPDSENTWEPRQNLKCIRVLKQFHKDLERELVRRH). In terms of domain architecture, Pre-SET spans 179 to 240 (VGCECQDCLL…DCPNRVVQKG (62 aa)). Zn(2+)-binding residues include Cys-181, Cys-183, Cys-186, Cys-194, Cys-195, Cys-222, Cys-226, Cys-228, and Cys-232. Positions 243–366 (YDLCIFRTND…AGEELTFDYN (124 aa)) constitute an SET domain. 254 to 256 (RGW) contacts S-adenosyl-L-methionine. The mediates interaction with MECOM stretch occupies residues 255-377 (GWGVRTLEKI…QVDPVDMEST (123 aa)). At Lys-266 the chain carries N6-acetyllysine. Residues Tyr-297 and 323–324 (NH) each bind S-adenosyl-L-methionine. Residue Cys-326 coordinates Zn(2+). At Ser-391 the chain carries Phosphoserine. The 17-residue stretch at 396-412 (VRIECKCGTTACRKYLF) folds into the Post-SET domain. The Zn(2+) site is built by Cys-400, Cys-402, and Cys-407.

Belongs to the class V-like SAM-binding methyltransferase superfamily. Histone-lysine methyltransferase family. Suvar3-9 subfamily. As to quaternary structure, interacts with CCAR2 and GFI1B. Component of the eNoSC complex, composed of SIRT1, SUV39H1 and RRP8. Interacts with H3 and H4 histones. Interacts with DNMT3B, CBX1, CBX4, MBD1, RUNX1, RUNX3, MYOD1, SMAD5 and RB1. Interacts with SBF1 through the SET domain. Interacts with HDAC1 and HDAC2 through the N-terminus and associates with the core histone deacetylase complex composed of HDAC1, HDAC2, RBBP4 and RBBP7. Interacts (via SET domain) with MECOM; enhances MECOM transcriptional repression activity. Interacts with LMNA; the interaction increases stability of SUV39H1. The large PER complex involved in the histone methylation is composed of at least PER2, CBX3, TRIM28, SUV39H1 and/or SUV39H2; CBX3 mediates the formation of the complex. Phosphorylated on serine residues, and to a lesser degree, on threonine residues. In terms of processing, acetylated at Lys-266, leading to inhibition of enzyme activity. SIRT1-mediated deacetylation relieves this inhibition. Post-translationally, ubiquitinated by the DCX(DCAF13) E3 ubiquitin ligase complex, leading to its degradation. In terms of tissue distribution, widely expressed.

It localises to the nucleus. It is found in the nucleus lamina. The protein resides in the nucleoplasm. Its subcellular location is the chromosome. The protein localises to the centromere. The enzyme catalyses L-lysyl(9)-[histone H3] + 3 S-adenosyl-L-methionine = N(6),N(6),N(6)-trimethyl-L-lysyl(9)-[histone H3] + 3 S-adenosyl-L-homocysteine + 3 H(+). With respect to regulation, negatively regulated by CCAR2. Functionally, histone methyltransferase that specifically trimethylates 'Lys-9' of histone H3 using monomethylated H3 'Lys-9' as substrate. H3 'Lys-9' trimethylation represents a specific tag for epigenetic transcriptional repression by recruiting HP1 (CBX1, CBX3 and/or CBX5) proteins to methylated histones. Mainly functions in heterochromatin regions, thereby playing a central role in the establishment of constitutive heterochromatin at pericentric and telomere regions. H3 'Lys-9' trimethylation is also required to direct DNA methylation at pericentric repeats. SUV39H1 is targeted to histone H3 via its interaction with RB1 and is involved in many processes, such as repression of MYOD1-stimulated differentiation, regulation of the control switch for exiting the cell cycle and entering differentiation, repression by the PML-RARA fusion protein, BMP-induced repression, repression of switch recombination to IgA and regulation of telomere length. Component of the eNoSC (energy-dependent nucleolar silencing) complex, a complex that mediates silencing of rDNA in response to intracellular energy status and acts by recruiting histone-modifying enzymes. The eNoSC complex is able to sense the energy status of cell: upon glucose starvation, elevation of NAD(+)/NADP(+) ratio activates SIRT1, leading to histone H3 deacetylation followed by dimethylation of H3 at 'Lys-9' (H3K9me2) by SUV39H1 and the formation of silent chromatin in the rDNA locus. Recruited by the PER complex to the E-box elements of the circadian target genes such as PER2 itself or PER1, contributes to the conversion of local chromatin to a heterochromatin-like repressive state through H3 'Lys-9' trimethylation. This Mus musculus (Mouse) protein is Histone-lysine N-methyltransferase SUV39H1 (Suv39h1).